Consider the following 397-residue polypeptide: DNA replication and repair protein RecF (397 aa).

30–37 (GPNGQGKT) lines the ATP pocket.

The protein belongs to the RecF family.

It localises to the cytoplasm. Its function is as follows. The RecF protein is involved in DNA metabolism; it is required for DNA replication and normal SOS inducibility. RecF binds preferentially to single-stranded, linear DNA. It also seems to bind ATP. The polypeptide is DNA replication and repair protein RecF (Beutenbergia cavernae (strain ATCC BAA-8 / DSM 12333 / CCUG 43141 / JCM 11478 / NBRC 16432 / NCIMB 13614 / HKI 0122)).